Here is a 77-residue protein sequence, read N- to C-terminus: Defensin-B6 (77 aa).

The signal sequence occupies residues 1–20 (MKTLFFLSVFIFLLLHLSPG). Cystine bridges form between C43-C70, C50-C64, and C54-C71.

The protein belongs to the beta-defensin family. Lowly expressed in spleen, kidney and lung.

It is found in the secreted. Its function is as follows. Has antimicrobial activity. The sequence is that of Defensin-B6 from Ornithorhynchus anatinus (Duckbill platypus).